The primary structure comprises 241 residues: Demethylmenaquinone methyltransferase (241 aa).

Thr-73 and Asp-92 together coordinate S-adenosyl-L-methionine.

This sequence belongs to the class I-like SAM-binding methyltransferase superfamily. MenG/UbiE family.

It catalyses the reaction a 2-demethylmenaquinol + S-adenosyl-L-methionine = a menaquinol + S-adenosyl-L-homocysteine + H(+). Its pathway is quinol/quinone metabolism; menaquinone biosynthesis; menaquinol from 1,4-dihydroxy-2-naphthoate: step 2/2. In terms of biological role, methyltransferase required for the conversion of demethylmenaquinol (DMKH2) to menaquinol (MKH2). This chain is Demethylmenaquinone methyltransferase, found in Chlorobaculum parvum (strain DSM 263 / NCIMB 8327) (Chlorobium vibrioforme subsp. thiosulfatophilum).